A 462-amino-acid chain; its full sequence is UDP-N-acetylmuramoylalanine--D-glutamate ligase (462 aa).

ATP is bound at residue 109–115 (GTDGKST).

Belongs to the MurCDEF family.

Its subcellular location is the cytoplasm. It carries out the reaction UDP-N-acetyl-alpha-D-muramoyl-L-alanine + D-glutamate + ATP = UDP-N-acetyl-alpha-D-muramoyl-L-alanyl-D-glutamate + ADP + phosphate + H(+). It participates in cell wall biogenesis; peptidoglycan biosynthesis. Cell wall formation. Catalyzes the addition of glutamate to the nucleotide precursor UDP-N-acetylmuramoyl-L-alanine (UMA). In Leptospira borgpetersenii serovar Hardjo-bovis (strain JB197), this protein is UDP-N-acetylmuramoylalanine--D-glutamate ligase.